An 891-amino-acid polypeptide reads, in one-letter code: DNA mismatch repair protein MutS (891 aa).

Glycine 634–serine 641 lines the ATP pocket.

This sequence belongs to the DNA mismatch repair MutS family.

This protein is involved in the repair of mismatches in DNA. It is possible that it carries out the mismatch recognition step. This protein has a weak ATPase activity. The protein is DNA mismatch repair protein MutS of Burkholderia pseudomallei (strain 668).